A 971-amino-acid polypeptide reads, in one-letter code: Valine--tRNA ligase (971 aa).

The short motif at 55–65 (PNVTGSLHMGH) is the 'HIGH' region element. Residues 572-576 (KMSKS) carry the 'KMSKS' region motif. Lysine 575 lines the ATP pocket. Residues 906-933 (KAELGRLQKDLDKVQKQHDQIASKLANE) are a coiled coil.

Belongs to the class-I aminoacyl-tRNA synthetase family. ValS type 1 subfamily. In terms of assembly, monomer.

Its subcellular location is the cytoplasm. The catalysed reaction is tRNA(Val) + L-valine + ATP = L-valyl-tRNA(Val) + AMP + diphosphate. In terms of biological role, catalyzes the attachment of valine to tRNA(Val). As ValRS can inadvertently accommodate and process structurally similar amino acids such as threonine, to avoid such errors, it has a 'posttransfer' editing activity that hydrolyzes mischarged Thr-tRNA(Val) in a tRNA-dependent manner. The chain is Valine--tRNA ligase from Acinetobacter baylyi (strain ATCC 33305 / BD413 / ADP1).